The chain runs to 4576 residues: MGLPLARLVAACLVLALAKGSELQKEARSRNHVCSTWGDFHYKTFDGDVYRFPGLCDYNFASDCRDSYKEFAVHLKRGLGEAGGHSQIESILITIKDDTIYLTHKLAVVNGAMVSTPHYSSGLLIEKNDAYTKVYSRAGLSLMWNREDALMVELDSRFQNHTCGLCGDFNGMQTNYEFLSEEGIQFSAIEFGNMQKINKPEVQCEDPEAVQEPESCSEHRAECERLLTSAAFEDCQTRVPVESYVRACMHDRCQCPKGGACECSTLAEFSRQCSHAGGRPENWRTASLCPKKCPNNMVYLESSSPCVDTCSHLEVSSLCEEHYMDGCFCPEGTVYDDITGSGCIPVSQCHCKLHGHLYMPGQEFTNDCEQCVCNAGRWVCKDLPCPETCALEGGSHITTFDGKKFTFHGDCYYVLTKSEHNDSYALLGELASCGSTDKQTCLKTVVLLTDDKKNVVAFKSGGSVLLNEMEVTLPHVAASFSIFQPSSYHIVVNTKFGLRLQIQLLPVMQLFVTLDQAAQGQVQGLCGNFNGLESDDFMTSGGMVEATGAGFANTWKAQSSCHDKLDWLDDPCSLNIESANYAEHWCSLLKRSETPFARCHLAVDPTEYYKRCKYDTCNCQNNEDCMCAALSSYARACAAKGVMLWGWRERVCNKDVHACPSSQIFMYNLTTCQQTCRSLSEGDSHCLKGFAPVEGCGCPDHTFMDEKGRCVPLAKCSCYHHGLYLEAGDVILRQEERCICRNGRLQCTQVKLIGHTCQYPKILVDCNNLTALAVRKPRPTSCQTLVAGYYHTECISGCVCPDGLLDDGRGGCVEEDKCPCIHNKDLYSSGESIKLDCNNTCTCQKGRWECTRYACHSTCSIYGSGHYITFDGKHYDFDGHCSYVAVQDYCGQNSTGSFSIITENVPCGTTGVTCSKAIKIFIGGTELKLVDKHRVVKQLEEGHHVPYITREVGQYLVVEASSGIIVIWDKKTTIFIKLDPSYKGTVCGLCGNFDDQTKNDFTTRDHMVVTSELDFGNSWKEASTCPDVSHNPDPCSLNPHRRSWAEKQCSIIKSRVFKVCHSKVDPTVFYEACVHDSCSCDTGGDCDCFCSAVASYAQECTKAEACVFWRTPDLCPIFCDYYNPPDECEWHYEPCGNRSFETCRTLNGIHSNISVSYLEGCYPRCPEDRPIYDEDLKKCVTGDKCGCYIEDTRYPPGGSVPTDEICKSCTCTNTSKIECHPDEGKILNMTQDGIFCYWEFCGPNGTVGQHFNICGSSTAIPSTTTSFTTISTPISTTPISTTITTTTVTMTTEQVPCCFWSDWINKYHPTKENGGDRETFTHVCSAPEDIECRAATDPKLSWEELGQKVQCNVSTGLICNNEDQYGIGEFELCYDYEIRVNCCYPMEYCTPSTISPTTSTTTLSTTPPTSSPTTLPTSSPVTSSATLPTTSSITSTISPTTSPTTPLTTSPTTSPTTSPTTPSTTSPTTPTTTSPTTPSTTSPTTPSTTPSTTSPTTPSTTSPTTPTSTSPNTQSTTSPTTSPTTPSTTSPTTSPTTPSTTSPTISTTTSTISPTTPSTTSPNTPSTTSSTIPSTTSPTTPSTTSPTISTTTSTTSPTTPSTTSPTTPSTTSPTTPSTTSPTISTTTLTTSPTTPSTTSPTTPSTTSPTTPSTTSPTISITTSTISPTTPSTTSPTTLSTTSPTTPSTTSPTISTTTSTSPTTPSTTSPTTPSTPSSTTPSTTSPTTPSTTSPTISTTSSTISPTTPSTTSPTTPSTTSPTTPSTTSPTISTTTSTISPTTPSTTSPTTPSTTSPTTPSTTSPTISTTTSTISPTTPSTTSPTTPSTTSPNTPSTTSTTTSTTSPTTPSTTSPTISTTTSTTSPTTPSTTSPTISTTTSTTSPTTPSTTSPTTPSTTSPTTPSTTSPTTPSTTSPTISTTSSTISPTTPSTTSPTTPSTTSPTTPSTTSPTISTTTSTTSPTTPSTTSPTISTTTSTISPTTPSTSSPTTPSTTSPTTPSTTSPTISTTTSTTSPTTPSTTSPTTPSTTSPTISTTTSTTSPTTPSTTSPTISTTTSTTSPTTPSTTSPTTPSTTSPTTPSTTSPTTPSTTSPTISTTSSTISPTTPSTTSPTTPSTTSPTTPSTTSPTISTTTSTTSPTTPSTTSPTISTTTSTTSPTTPSTTSPTTPSTTSPTTPSTTSPTTPSTTSPTISTTSSTISPTTPSTTSPTTPSTTSPTTPSTTSPTISTTTSTTSPTTPSTTSPTISTTTSTISPTTPSTTSPITPSTTSPTTPSTTSPTISTTTSTTSPTTPSTTSPTISTTTSTISPTTPSTTSPITPSTTSPTTPSTTSPTISTTTSTISPTTPSTTSPTTPSTTSPTTLSTTSPTISTTTSTISPTTPSTTSPTTPSTTSPTTPSTTSPTTPSTTSPTISTTTSTISPTTSPTTPSTTSPTTHSTTSPTTPSTTSPTISTTTSTISPTTPSTTSLTTPSTTSPTTPSTTSPTTPSTTSPTISTTTSTISPTTPSTTSPTTPSTTSPTTPSTTSPNISTTTSTISPTTPSTTSPTTPSTTSPTTPSTTSPTISTTTSTISPTTPSTTSPTTPSTTSPTTPSTTSPTTPSTTSPTISTTTSTISPTTPSTTSPTTPSTTSPTTQSTTSPTISTNTPSTTSPTTPSTTSPTISTTTSTISPTTPSTTSPTTPSTTSPTTSSTTSPTISTTTSTISPTTPSTTSPTTPSTTSPTTPLTTSPTISTTTSTISPTTPSTTSPTTPSTTSPTTPSTTSPTTPSTTSPTISTTTSTISPTTPSTTSPTTSPTTPSTTSPTTSSTATQTISVTTSQTSSSATPPNSSPTSSATTSPTTSSGTSTATSPSTSPTTSSTFTTPPSTTCIDDCKWTGWLDSGKPTYDIKSGDFELIKGVCEPHWEVQNISCRAVMHSNIPLDQLGQIVVCNKEVGLVCKNEDQEIGGIIPMRMCLNYEINVYCCNPICFTSTPSSTTTETPTTTSTTKTSILTSTTTQTPSPSPTTTVTPTPAPTTTQIPTSTSTTTQTTTPTPITETSTPTSTISQTPSPASTTTVTPATTSTTTETSTSTSTTTQTTSPTPTVTETSTPRSTTTQTPSPVPTTTVTSTPTPTIGETTTPTTTITETFTPRSTTTQTSSPVPSTTVTPTPTPITTETSTSTPTTTQTTTPTPITETSTPISTTTHTPSPSSTTSTTSTQTPTPTTTGPSTSTSTTIQTTTPTPITETFTPTSTTTQTPSSTPTTTVTPTPTTTETSTSTSTTTQTTTPTPITETFTPTSTTTQTPSPTPTTTVNPTPTPTTIGPSTSTSTTTQTTTPTPTGTETSTPTSTTTQTPSPTPTTTVTPTPSPTTTETSTSTTTQTTTPTPTGTETSTPTSTTTQTPSPTPTTTVTPTPSPTTTETSTSTTTQTTTPTPITETSTPTSTTTQTPSPTPTTTVTPTSTPTTTGTSTSTSTTTQTTTPTPTGTETFTPRSTTTQTPSSSSTTSGTPTPTPTTTHTSTLTSTTEASTPTPIIETSTPKSTTIQTPSPSPTTTVTSPTTPTTTVKETSTPTNTVPTTGSTSSKPPTESSTPVTSQSTPSPPTESTTLSSTPVTTATSSTASSPGTTSPFVTSSAGSTPSSPPGSTPGPTTSSGMPTSSKTTTGPTSPTTRPPSTSTPTSFTVPTETTTQTRPLSTTPTTLETTRTSSWGTFSSTSPITSPSTVWTHTETQVTCCVLNEMFYGPGELVYNSTHGGTCFYVNCSLDCHLQFFNWSCPSTPSTPTPSTPTPTPSQTTTPSTTSSKSTPSTPQSTSPKSTLSTPTKTTPYGCPDFDPPRQVNETWWLCNCTMAICNHDNVVEIVPLKCDPPPMPTCANGLKPVRVPDADNCCWHWECDCYCTGWGDPHFVTFDGLYYSYQGNCTYVLVEEITPTVDNFGVYIDNYHCDANDKVSCPRTLIVRHETQEVQIKTVRMMPIEVEVQVNKQLVALPYKKYGLEVYESGINIVVNISRLEAKISYNGLSFSIRLPYKLFGNNTKGQCGTCTNNTADDCILPSGKIISDCEIAADEWLVNDPSKPHCPHKGLTTKRPATTTPGLSLNNCTVSPVCHLIMDSLFSQCHAFVPPKHYYEACLFDSCYVPGSNMECASVQAYATLCAKEGVCIDWRNHTQGVCSVKCPPHKQYQACGPEEEPTCQPSSSQNSTLLVEGCFCPEGTTKFAPGYDVCVKTCGCVGPDNVPREFGEHFEFDCKDCVCREGGSGIVCQPKKCSGGNQTTCEEDGTYLVVETNPDDKCCNITSCKCDTKRCKAERPTCLLGFEVKTEIVPGKCCPVYSCVPKGVCVHQNAEYQPGSPVYSNKCQDCVCTNILDNSTQLNVISCTHVPCNISCSSGFELVDVPGECCKKCQQTHCIIEGPKQQYIILKPGEIHKNPSNKCTFFSCMKINNQLISSVSNITCPDFNPSDCVSGSITYMPNGCCKTCIPQNQTRVPCSAVSVMKEISYNGCTKNISMNYCFGSCGTFAMYSAQVQGLDHRCSCCKEEKTSVRSVTLECPDGSELSHTYTHIESCLCQDTVCGLPQAQQVRTRRSSPRFLGRK.

Positions 1–20 (MGLPLARLVAACLVLALAKG) are cleaved as a signal peptide. Residue Ser-21 is modified to Phosphoserine. The VWFD 1 domain occupies 32-205 (HVCSTWGDFH…KINKPEVQCE (174 aa)). Intrachain disulfides connect Cys-34–Cys-166, Cys-56–Cys-204, Cys-64–Cys-163, Cys-216–Cys-253, Cys-223–Cys-248, Cys-235–Cys-273, Cys-255–Cys-261, Cys-263–Cys-289, Cys-293–Cys-327, Cys-306–Cys-319, Cys-310–Cys-349, Cys-329–Cys-343, Cys-351–Cys-373, Cys-368–Cys-385, Cys-371–Cys-380, Cys-389–Cys-526, Cys-411–Cys-561, Cys-433–Cys-441, Cys-572–Cys-617, Cys-586–Cys-612, Cys-599–Cys-637, Cys-619–Cys-625, Cys-627–Cys-652, Cys-659–Cys-696, Cys-672–Cys-686, Cys-676–Cys-716, Cys-698–Cys-710, Cys-718–Cys-740, and Cys-738–Cys-747. Asp-46 is a binding site for Ca(2+). The Cu(+) site is built by Met-143 and Met-151. A Cu(2+)-binding site is contributed by Glu-153. The N-linked (GlcNAc...) asparagine glycan is linked to Asn-160. Ca(2+)-binding residues include Asp-168, Asn-170, and Glu-177. His-275 is a Cu(2+) binding site. One can recognise a TIL domain in the interval 293–349 (CPNNMVYLESSSPCVDTCSHLEVSSLCEEHYMDGCFCPEGTVYDDITGSGCIPVSQC). Cu(2+) is bound at residue His-322. Residue Met-324 participates in Cu(+) binding. Residues 387 to 562 (ETCALEGGSH…NTWKAQSSCH (176 aa)) enclose the VWFD 2 domain. Asp-401 contributes to the Ca(2+) binding site. Residue Asn-421 is glycosylated (N-linked (GlcNAc...) asparagine). Ca(2+) is bound by residues Asn-528, Asn-530, Leu-532, Asp-535, and Asp-536. Asn-668 carries N-linked (GlcNAc...) asparagine glycosylation. The N-linked (GlcNAc...) asparagine glycan is linked to Asn-768. Intrachain disulfides connect Cys-782–Cys-818, Cys-800–Cys-812, Cys-820–Cys-843, Cys-837–Cys-855, Cys-841–Cys-850, Cys-859–Cys-990, Cys-881–Cys-1025, Cys-890–Cys-987, Cys-907–Cys-914, Cys-1035–Cys-1078, Cys-1049–Cys-1073, Cys-1060–Cys-1100, Cys-1080–Cys-1088, Cys-1090–Cys-1115, Cys-1106–Cys-1135, Cys-1119–Cys-1161, Cys-1143–Cys-1185, Cys-1165–Cys-1179, Cys-1187–Cys-1211, Cys-1206–Cys-1236, and Cys-1209–Cys-1219. N-linked (GlcNAc...) asparagine glycosylation occurs at Asn-838. One can recognise a VWFD 3 domain in the interval 857–1026 (STCSIYGSGH…NSWKEASTCP (170 aa)). Residue Asp-871 participates in Ca(2+) binding. The N-linked (GlcNAc...) asparagine glycan is linked to Asn-893. Ca(2+) is bound by residues Asn-992, Asp-994, Asn-999, and Asp-1000. 2 N-linked (GlcNAc...) asparagine glycosylation sites follow: Asn-1137 and Asn-1152. Residues Asn-1213, Asn-1228, and Asn-1244 are each glycosylated (N-linked (GlcNAc...) asparagine). O-linked (GalNAc) threonine glycans are attached at residues Thr-1265, Thr-1268, Thr-1269, Thr-1281, and Thr-1292. The Ca(2+) site is built by Asn-1305, His-1308, Gly-1315, Asp-1316, and Glu-1318. Residue Asn-1352 is glycosylated (N-linked (GlcNAc...) asparagine). 2 residues coordinate Ca(2+): Asp-1375 and Tyr-1376. 5 tandem repeats follow at residues 1395–1415 (SPTT…PTTL), 1416–1427 (PTSSPVTSSATL), 1428–1437 (PTTSSITSTI), 1438–1453 (SPTT…SPTT), and 1454–1460 (SPTTSPT). A disordered region spans residues 1395–2866 (SPTTSTTTLS…PTTSSTFTTP (1472 aa)). A 7B repeat occupies 1478-1497 (PSTTSPTTPSTTPSTTSPTT). The 8A repeat unit spans residues 1498-1510 (PSTTSPTTPTSTS). The stretch at 1530–1556 (SPTTSPTTPSTTSPTISTTTSTISPTT) is one 9B repeat. One copy of the 10A repeat lies at 1557 to 1572 (PSTTSPNTPSTTSSTI). Residues 1573 to 1588 (PSTTSPTTPSTTSPTI) form a 10B repeat. One copy of the 11A repeat lies at 1589–1607 (STTTSTTSPTTPSTTSPTT). An 11B repeat occupies 1608 to 1634 (PSTTSPTTPSTTSPTISTTTLTTSPTT). Repeat copies occupy residues 1635–1642 (PSTTSPTT) and 1665–1681 (ISPT…LSTT). Residues Asn-2529 and Asn-2910 are each glycosylated (N-linked (GlcNAc...) asparagine). Low complexity-rich tracts occupy residues 2975-3623 (PSST…GSTP) and 3631-3706 (PGPT…TSPS). Residues 2975–3706 (PSSTTTETPT…SSTSPITSPS (732 aa)) are disordered. Asn-3734, Asn-3745, and Asn-3756 each carry an N-linked (GlcNAc...) asparagine glycan. Positions 3764–3774 (STPTPSTPTPT) are enriched in pro residues. Positions 3764 to 3806 (STPTPSTPTPTPSQTTTPSTTSSKSTPSTPQSTSPKSTLSTPT) are disordered. A compositionally biased stretch (low complexity) spans 3775–3806 (PSQTTTPSTTSSKSTPSTPQSTSPKSTLSTPT). N-linked (GlcNAc...) asparagine glycosylation is found at Asn-3823, Asn-3830, and Asn-3903. One can recognise a VWFD 4 domain in the interval 3880-4063 (CYCTGWGDPH…VNDPSKPHCP (184 aa)). Cystine bridges form between Cys-3882-Cys-4023, Cys-3904-Cys-4062, and Cys-3928-Cys-3936. N-linked (GlcNAc...) asparagine glycosylation is found at Asn-3991, Asn-4017, Asn-4028, Asn-4083, Asn-4149, Asn-4183, Asn-4254, Asn-4277, Asn-4351, Asn-4366, Asn-4434, Asn-4465, and Asn-4488. 2 VWFC domains span residues 4213–4282 (CVGP…TSCK) and 4320–4387 (GVCV…KKCQ). Intrachain disulfides connect Cys-4471/Cys-4518, Cys-4485/Cys-4532, Cys-4494/Cys-4548, and Cys-4498/Cys-4550. The CTCK domain occupies 4471-4556 (CSAVSVMKEI…SCLCQDTVCG (86 aa)).

As to quaternary structure, homomultimer; disulfide-linked. The N- and C-terminus mediate their assembly into higher order structures to form filaments. The CTCK domains of two polypeptides associate in the endoplasmic reticulum to generate intermolecularly disulfide-bonded dimers. These dimers progress to the Golgi apparatus, which is a more acidic environment than the endoplasmic reticulum. Under acidic conditions, the N-termini form non-covalent intermolecular interactions that juxtapose assemblies of the third VWD domain (VWD3) from different CTCK-linked dimers. The VWD3 assemblies then become disulfide bonded to one another to produce long, disulfide-linked polymers that remain highly compact until secretion. Interacts with FCGBP. Interacts with AGR2; disulfide-linked. In terms of processing, O-glycosylated. O-glycosylation is required for mucin assembly. Goblet cells synthesize two forms of mucin that differ in branched chain O-glycosylation and the site of production in the colon. Post-translationally, may undergo proteolytic cleavage in the outer mucus layer of the colon, contributing to the expanded volume and loose nature of this layer which allows for bacterial colonization in contrast to the inner mucus layer which is dense and devoid of bacteria. At low pH of 6 and under, undergoes autocatalytic cleavage in vitro in the N-terminal region of the fourth VWD domain. It is likely that this also occurs in vivo and is triggered by the low pH of the late secretory pathway. Highly expressed in goblet cells of the colon with lower levels in the small intestine and no expression in the stomach (at protein level).

The protein resides in the secreted. Coats the epithelia of the intestines and other mucus membrane-containing organs to provide a protective, lubricating barrier against particles and infectious agents at mucosal surfaces. Major constituent of the colon mucus, which is mainly formed by large polymeric networks of MUC2 secreted by goblet cells that cover the exposed surfaces of intestine. MUC2 networks form hydrogels that guard the underlying epithelium from pathogens and other hazardous matter entering from the outside world, while permitting nutrient absorption and gas exchange. Acts as a divalent copper chaperone that protects intestinal cells from copper toxicity and facilitates nutritional copper unptake into cells. Binds both Cu(2+) and its reduced form, Cu(1+), at two juxtaposed binding sites: Cu(2+), once reduced to Cu(1+) by vitamin C (ascorbate) or other dietary antioxidants, transits to the other binding site. MUC2-bound Cu(1+) is protected from oxidation in aerobic environments, and can be released for nutritional delivery to cells. Mucin gels store antimicrobial molecules that participate in innate immunity. Mucin glycoproteins also house and feed the microbiome, lubricate tissue surfaces, and may facilitate the removal of contaminants and waste products from the body. Goblet cells synthesize two forms of MUC2 mucin that differ in branched chain O-glycosylation and the site of production in the colon: a (1) 'thick' mucus that wraps the microbiota to form fecal pellets is produced in the proximal, ascending colon. 'Thick' mucus transits along the descending colon and is lubricated by a (2) 'thin' MUC2 mucus produced in the distal colon which adheres to the 'thick' mucus. The sequence is that of Mucin-2 from Mus musculus (Mouse).